The sequence spans 89 residues: Small ribosomal subunit protein uS14 (89 aa).

This sequence belongs to the universal ribosomal protein uS14 family. As to quaternary structure, part of the 30S ribosomal subunit. Contacts proteins S3 and S10.

Binds 16S rRNA, required for the assembly of 30S particles and may also be responsible for determining the conformation of the 16S rRNA at the A site. This Chloroherpeton thalassium (strain ATCC 35110 / GB-78) protein is Small ribosomal subunit protein uS14.